A 461-amino-acid polypeptide reads, in one-letter code: 3-isopropylmalate dehydratase large subunit (461 aa).

[4Fe-4S] cluster-binding residues include Cys-338, Cys-398, and Cys-401.

The protein belongs to the aconitase/IPM isomerase family. LeuC type 1 subfamily. As to quaternary structure, heterodimer of LeuC and LeuD. The cofactor is [4Fe-4S] cluster.

The catalysed reaction is (2R,3S)-3-isopropylmalate = (2S)-2-isopropylmalate. It functions in the pathway amino-acid biosynthesis; L-leucine biosynthesis; L-leucine from 3-methyl-2-oxobutanoate: step 2/4. In terms of biological role, catalyzes the isomerization between 2-isopropylmalate and 3-isopropylmalate, via the formation of 2-isopropylmaleate. The chain is 3-isopropylmalate dehydratase large subunit from Streptococcus mutans serotype c (strain ATCC 700610 / UA159).